A 156-amino-acid polypeptide reads, in one-letter code: Protein-export protein SecB (156 aa).

Belongs to the SecB family. In terms of assembly, homotetramer, a dimer of dimers. One homotetramer interacts with 1 SecA dimer.

It is found in the cytoplasm. One of the proteins required for the normal export of preproteins out of the cell cytoplasm. It is a molecular chaperone that binds to a subset of precursor proteins, maintaining them in a translocation-competent state. It also specifically binds to its receptor SecA. This Yersinia enterocolitica serotype O:8 / biotype 1B (strain NCTC 13174 / 8081) protein is Protein-export protein SecB.